Reading from the N-terminus, the 320-residue chain is MKLRFIECHIPKHLFMGIDEIREWDGVIWANVKTNGTISTIQILTTLKDSEKIVDKLKEMYGGANYRVVVFEPTMTYPPIEEEEEKEEPERLIREELYNIASDIANLSKENMLMLILSTIVAIAGIYKDDVALLIASMIIAPLLGPNIALSLSITVADYKLALKSIKTLIAELIFVIILSMIAGHYLPISLDNPQIHSRITLDFWSIIIALSAGIAGSLSTVSNISSIAVGVMIAIALLPPLAVFGLLIGAGYVEQSFSALILFLINMIAINLSAIVIFSAYGISPYRWWKKEEARKYTLYAILLWVTLFIAIFVLIIYH.

7 helical membrane passes run 107–127 (LSKENMLMLILSTIVAIAGIY), 131–151 (VALLIASMIIAPLLGPNIALS), 169–189 (LIAELIFVIILSMIAGHYLPI), 200–220 (ITLDFWSIIIALSAGIAGSLS), 228–248 (IAVGVMIAIALLPPLAVFGLL), 260–280 (ALILFLINMIAINLSAIVIFS), and 299–319 (TLYAILLWVTLFIAIFVLIIY).

Its subcellular location is the cell membrane. This is an uncharacterized protein from Methanocaldococcus jannaschii (strain ATCC 43067 / DSM 2661 / JAL-1 / JCM 10045 / NBRC 100440) (Methanococcus jannaschii).